We begin with the raw amino-acid sequence, 355 residues long: Tetraacyldisaccharide 4'-kinase (355 aa).

48–55 provides a ligand contact to ATP; sequence SVGGTGKT.

It belongs to the LpxK family.

The catalysed reaction is a lipid A disaccharide + ATP = a lipid IVA + ADP + H(+). It participates in glycolipid biosynthesis; lipid IV(A) biosynthesis; lipid IV(A) from (3R)-3-hydroxytetradecanoyl-[acyl-carrier-protein] and UDP-N-acetyl-alpha-D-glucosamine: step 6/6. Transfers the gamma-phosphate of ATP to the 4'-position of a tetraacyldisaccharide 1-phosphate intermediate (termed DS-1-P) to form tetraacyldisaccharide 1,4'-bis-phosphate (lipid IVA). The chain is Tetraacyldisaccharide 4'-kinase from Pelodictyon phaeoclathratiforme (strain DSM 5477 / BU-1).